The chain runs to 204 residues: Methylthioribulose-1-phosphate dehydratase (204 aa).

Zn(2+) is bound by residues His94 and His96.

Belongs to the aldolase class II family. MtnB subfamily. Zn(2+) serves as cofactor.

It catalyses the reaction 5-(methylsulfanyl)-D-ribulose 1-phosphate = 5-methylsulfanyl-2,3-dioxopentyl phosphate + H2O. It functions in the pathway amino-acid biosynthesis; L-methionine biosynthesis via salvage pathway; L-methionine from S-methyl-5-thio-alpha-D-ribose 1-phosphate: step 2/6. Its function is as follows. Catalyzes the dehydration of methylthioribulose-1-phosphate (MTRu-1-P) into 2,3-diketo-5-methylthiopentyl-1-phosphate (DK-MTP-1-P). The sequence is that of Methylthioribulose-1-phosphate dehydratase from Serratia proteamaculans (strain 568).